We begin with the raw amino-acid sequence, 420 residues long: Protein ECERIFERUM 26-like (420 aa).

Belongs to the plant acyltransferase family. In terms of tissue distribution, highly expressed in flowers. Expressed in leaves.

Involved in biosynthesis of the epicuticular wax. Plays a role in very-long-chain fatty acid (VLCFA) biosynthesis and is required for VLCFA elongation in leaf. Despite its classification as a BAHD acyltransferase based on sequence homology, CER26L does not seem to share the catalytic mechanism of the members of the BAHD family. This is Protein ECERIFERUM 26-like (CER26L) from Arabidopsis thaliana (Mouse-ear cress).